Reading from the N-terminus, the 430-residue chain is Ribosomal protein uS12 methylthiotransferase RimO (430 aa).

In terms of domain architecture, MTTase N-terminal spans 1-116; that stretch reads MKIGIKVLGC…IAEAIEKATP (116 aa). Positions 10, 46, 79, 146, 150, and 153 each coordinate [4Fe-4S] cluster. The region spanning 132–362 is the Radical SAM core domain; the sequence is SCNNSFAYVK…LIFQSQIAYE (231 aa). One can recognise a TRAM domain in the interval 365–430; that stretch reads KRFVGKNLNV…DEYDLKGELI (66 aa).

It belongs to the methylthiotransferase family. RimO subfamily. Requires [4Fe-4S] cluster as cofactor.

It localises to the cytoplasm. It carries out the reaction L-aspartate(89)-[ribosomal protein uS12]-hydrogen + (sulfur carrier)-SH + AH2 + 2 S-adenosyl-L-methionine = 3-methylsulfanyl-L-aspartate(89)-[ribosomal protein uS12]-hydrogen + (sulfur carrier)-H + 5'-deoxyadenosine + L-methionine + A + S-adenosyl-L-homocysteine + 2 H(+). Catalyzes the methylthiolation of an aspartic acid residue of ribosomal protein uS12. This is Ribosomal protein uS12 methylthiotransferase RimO from Pseudothermotoga lettingae (strain ATCC BAA-301 / DSM 14385 / NBRC 107922 / TMO) (Thermotoga lettingae).